Here is a 326-residue protein sequence, read N- to C-terminus: tRNA-cytidine(32) 2-sulfurtransferase (326 aa).

The short motif at 63–68 is the PP-loop motif element; the sequence is SGGKDS. [4Fe-4S] cluster is bound by residues Cys-138, Cys-141, and Cys-229.

It belongs to the TtcA family. In terms of assembly, homodimer. The cofactor is Mg(2+). It depends on [4Fe-4S] cluster as a cofactor.

It is found in the cytoplasm. The enzyme catalyses cytidine(32) in tRNA + S-sulfanyl-L-cysteinyl-[cysteine desulfurase] + AH2 + ATP = 2-thiocytidine(32) in tRNA + L-cysteinyl-[cysteine desulfurase] + A + AMP + diphosphate + H(+). Its pathway is tRNA modification. Functionally, catalyzes the ATP-dependent 2-thiolation of cytidine in position 32 of tRNA, to form 2-thiocytidine (s(2)C32). The sulfur atoms are provided by the cysteine/cysteine desulfurase (IscS) system. The polypeptide is tRNA-cytidine(32) 2-sulfurtransferase (Leptothrix cholodnii (strain ATCC 51168 / LMG 8142 / SP-6) (Leptothrix discophora (strain SP-6))).